The sequence spans 428 residues: Lysophosphatidic acid phosphatase type 6 (428 aa).

The transit peptide at 1–32 directs the protein to the mitochondrion; that stretch reads MITGVFSMRLWTPVGVLTSLAYCLHQRRVALA. The segment at 58–168 is substrate binding; it reads RHGARSPLKP…VFIRSTNIFR (111 aa). Residue H59 is the Nucleophile of the active site. D335 acts as the Proton donor in catalysis.

Belongs to the histidine acid phosphatase family. As to quaternary structure, monomer. As to expression, highly expressed in kidney, heart, small intestine, muscle, liver, prostate, testis, ovary and weakly expressed in thymus and colon.

The protein localises to the mitochondrion. It catalyses the reaction a phosphate monoester + H2O = an alcohol + phosphate. The catalysed reaction is 1-(9Z-octadecenoyl)-sn-glycero-3-phosphate + H2O = 1-(9Z-octadecenoyl)-sn-glycerol + phosphate. Its function is as follows. Hydrolyzes lysophosphatidic acid (LPA) containing a medium length fatty acid chain to the corresponding monoacylglycerol. Has highest activity with lysophosphatidic acid containing myristate (C14:0), monounsaturated oleate (C18:1) or palmitate (C16:0), and lower activity with C18:0 and C6:0 lysophosphatidic acid. The polypeptide is Lysophosphatidic acid phosphatase type 6 (ACP6) (Homo sapiens (Human)).